Consider the following 805-residue polypeptide: Phenylalanine--tRNA ligase beta subunit (805 aa).

The 110-residue stretch at 39-148 folds into the tRNA-binding domain; that stretch reads APPFTGVVVA…AALRPGTDIR (110 aa). Positions 399–474 constitute a B5 domain; sequence PVREPVRMRL…RVYGFERIPD (76 aa). Positions 452, 458, 461, and 462 each coordinate Mg(2+). Residues 703-804 form the FDX-ACB domain; it reads SRQPAVVRDL…LVAAHNARQR (102 aa).

It belongs to the phenylalanyl-tRNA synthetase beta subunit family. Type 1 subfamily. Tetramer of two alpha and two beta subunits. Mg(2+) serves as cofactor.

Its subcellular location is the cytoplasm. The catalysed reaction is tRNA(Phe) + L-phenylalanine + ATP = L-phenylalanyl-tRNA(Phe) + AMP + diphosphate + H(+). In Bordetella bronchiseptica (strain ATCC BAA-588 / NCTC 13252 / RB50) (Alcaligenes bronchisepticus), this protein is Phenylalanine--tRNA ligase beta subunit.